A 967-amino-acid polypeptide reads, in one-letter code: Leucine--tRNA ligase (967 aa).

A 'HIGH' region motif is present at residues 43–53; the sequence is PYLSGHLHVGH. A 'KMSKS' region motif is present at residues 650–654; sequence KMSKS. Position 653 (Lys-653) interacts with ATP.

This sequence belongs to the class-I aminoacyl-tRNA synthetase family.

Its subcellular location is the cytoplasm. It catalyses the reaction tRNA(Leu) + L-leucine + ATP = L-leucyl-tRNA(Leu) + AMP + diphosphate. The polypeptide is Leucine--tRNA ligase (Thermococcus kodakarensis (strain ATCC BAA-918 / JCM 12380 / KOD1) (Pyrococcus kodakaraensis (strain KOD1))).